A 434-amino-acid polypeptide reads, in one-letter code: Glutamyl-tRNA reductase (434 aa).

Substrate is bound by residues 52–55 (TCNR), Ser-115, 120–122 (ETQ), and Gln-126. Cys-53 functions as the Nucleophile in the catalytic mechanism. 195 to 200 (GAGEMI) lines the NADP(+) pocket.

The protein belongs to the glutamyl-tRNA reductase family. Homodimer.

The enzyme catalyses (S)-4-amino-5-oxopentanoate + tRNA(Glu) + NADP(+) = L-glutamyl-tRNA(Glu) + NADPH + H(+). Its pathway is porphyrin-containing compound metabolism; protoporphyrin-IX biosynthesis; 5-aminolevulinate from L-glutamyl-tRNA(Glu): step 1/2. In terms of biological role, catalyzes the NADPH-dependent reduction of glutamyl-tRNA(Glu) to glutamate 1-semialdehyde (GSA). The protein is Glutamyl-tRNA reductase of Cupriavidus pinatubonensis (strain JMP 134 / LMG 1197) (Cupriavidus necator (strain JMP 134)).